The primary structure comprises 38 residues: Very early lactation protein (38 aa).

In terms of assembly, homodimer. Post-translationally, O-glycosylated. Contains sialic acid residues. In terms of tissue distribution, found in the whey fraction of milk (at protein level).

Its subcellular location is the secreted. This is Very early lactation protein from Trichosurus vulpecula (Brush-tailed possum).